Consider the following 530-residue polypeptide: Phosphoenolpyruvate carboxykinase (ATP) (530 aa).

Residues R58, Y195, and K201 each coordinate substrate. ATP contacts are provided by residues K201, H220, and 236–244 (GLSGTGKTT). Residues K201 and H220 each coordinate Mn(2+). D257 is a binding site for Mn(2+). Residues E285, R321, 440–441 (RI), and T446 each bind ATP. R321 is a binding site for substrate.

This sequence belongs to the phosphoenolpyruvate carboxykinase (ATP) family. Mn(2+) serves as cofactor.

Its subcellular location is the cytoplasm. The catalysed reaction is oxaloacetate + ATP = phosphoenolpyruvate + ADP + CO2. It functions in the pathway carbohydrate biosynthesis; gluconeogenesis. In terms of biological role, involved in the gluconeogenesis. Catalyzes the conversion of oxaloacetate (OAA) to phosphoenolpyruvate (PEP) through direct phosphoryl transfer between the nucleoside triphosphate and OAA. The polypeptide is Phosphoenolpyruvate carboxykinase (ATP) (Staphylococcus aureus (strain bovine RF122 / ET3-1)).